The chain runs to 436 residues: Glutamyl-tRNA reductase (436 aa).

Substrate contacts are provided by residues 49–52, S109, 114–116, and Q120; these read TCNR and EPQ. Catalysis depends on C50, which acts as the Nucleophile. 189–194 contacts NADP(+); sequence GAGEMC.

It belongs to the glutamyl-tRNA reductase family. Homodimer.

It catalyses the reaction (S)-4-amino-5-oxopentanoate + tRNA(Glu) + NADP(+) = L-glutamyl-tRNA(Glu) + NADPH + H(+). The protein operates within porphyrin-containing compound metabolism; protoporphyrin-IX biosynthesis; 5-aminolevulinate from L-glutamyl-tRNA(Glu): step 1/2. Catalyzes the NADPH-dependent reduction of glutamyl-tRNA(Glu) to glutamate 1-semialdehyde (GSA). The polypeptide is Glutamyl-tRNA reductase (Pelobacter propionicus (strain DSM 2379 / NBRC 103807 / OttBd1)).